The following is a 440-amino-acid chain: Enolase (440 aa).

Positions 159 and 168 each coordinate substrate. Catalysis depends on E211, which acts as the Proton donor. Mg(2+) is bound by residues D245, E296, and D321. 2 residues coordinate substrate: E296 and D321. K346 functions as the Proton acceptor in the catalytic mechanism. Residues 373–376 (SHRS) and K397 contribute to the substrate site.

The protein belongs to the enolase family. In terms of assembly, homodimer. Requires Mg(2+) as cofactor.

The protein resides in the cytoplasm. The catalysed reaction is (2R)-2-phosphoglycerate = phosphoenolpyruvate + H2O. Its pathway is carbohydrate degradation; glycolysis; pyruvate from D-glyceraldehyde 3-phosphate: step 4/5. The chain is Enolase (eno-1) from Tuber borchii (White truffle).